We begin with the raw amino-acid sequence, 221 residues long: Cutinase 3 (221 aa).

The first 17 residues, 1 to 17 (MRFHTILLAALASLVIA), serve as a signal peptide directing secretion. 2 disulfide bridges follow: C44/C122 and C70/C84. Residue S133 is the Nucleophile of the active site. An intrachain disulfide couples C184 to C191. The active site involves D188. H201 acts as the Proton donor/acceptor in catalysis.

This sequence belongs to the cutinase family.

The protein resides in the secreted. It catalyses the reaction cutin + H2O = cutin monomers.. Functionally, catalyzes the hydrolysis of complex carboxylic polyesters found in the cell wall of plants. Degrades cutin, a macromolecule that forms the structure of the plant cuticle. Also degrades suberin, a specialized macromolecule found in the cell wall of various plant tissues. The sequence is that of Cutinase 3 from Emericella nidulans (strain FGSC A4 / ATCC 38163 / CBS 112.46 / NRRL 194 / M139) (Aspergillus nidulans).